A 196-amino-acid polypeptide reads, in one-letter code: Cyclin-dependent kinase inhibitor 6 (196 aa).

Disordered regions lie at residues 1–36 (MSERKRELAEEASSTSFSPLKKTKLNDSSDSSPDSH) and 55–151 (ASDE…RKTP). The segment covering 124-139 (SEGLGETTTEMESSSA) has biased composition (low complexity). T152 is modified (phosphothreonine; by KIN10).

The protein belongs to the CDI family. ICK/KRP subfamily. In terms of assembly, specifically interacts with CDKA-1, but not with CDKB1-1. Interacts with CYCD1-1, CYCD4-1 and RHF1A. Binds to FBL17. Interacts with KIN10. Interacts with CYCD3-1. In terms of processing, ubiquitinated by RHF1A and SCF(FBL17). Ubiquitination leads to its subsequent degradation, thus controlling cell cycle progression. Post-translationally, the phosphorylation at Thr-152 by KIN10 represses its activity. Expressed in newly formed organs such as the shoot apex. Expressed in cotyledon, primary root and marginal region of the leaves as well as in developing pollen.

It is found in the nucleus. The protein localises to the nucleoplasm. With respect to regulation, down-regulated by KIN10 under a phosphorylation-dependent manner. Functionally, binds and inhibits CYCD2-1/CDKA-1 complex kinase activity. Regulates cell division which is crucial for plant growth, development and morphogenesis. May inhibit CDK kinases specifically involved in the G1/S phase transition. This is Cyclin-dependent kinase inhibitor 6 (KRP6) from Arabidopsis thaliana (Mouse-ear cress).